A 354-amino-acid polypeptide reads, in one-letter code: Serum paraoxonase/arylesterase 2 (354 aa).

Cysteine 42 and cysteine 352 are oxidised to a cystine. Ca(2+) is bound by residues glutamate 53 and aspartate 54. Histidine 114 acts as the Proton acceptor in catalysis. Isoleucine 116, asparagine 167, aspartate 168, and asparagine 223 together coordinate Ca(2+). Residue asparagine 254 is glycosylated (N-linked (GlcNAc...) asparagine). 2 residues coordinate Ca(2+): aspartate 268 and asparagine 269. Residues asparagine 269 and asparagine 323 are each glycosylated (N-linked (GlcNAc...) asparagine).

It belongs to the paraoxonase family. Homotrimer. Ca(2+) serves as cofactor. Glycosylated. In terms of processing, the signal sequence is not cleaved.

It localises to the membrane. The catalysed reaction is a phenyl acetate + H2O = a phenol + acetate + H(+). It catalyses the reaction an N-acyl-L-homoserine lactone + H2O = an N-acyl-L-homoserine + H(+). Its function is as follows. Capable of hydrolyzing lactones and a number of aromatic carboxylic acid esters. The protein is Serum paraoxonase/arylesterase 2 (Pon2) of Rattus norvegicus (Rat).